The sequence spans 208 residues: Uracil phosphoribosyltransferase (208 aa).

Residues Arg-78, Arg-103, and 130-138 contribute to the 5-phospho-alpha-D-ribose 1-diphosphate site; that span reads DPMLATGGS. Residues Ile-193 and 198–200 contribute to the uracil site; that span reads GDA. Residue Asp-199 coordinates 5-phospho-alpha-D-ribose 1-diphosphate.

This sequence belongs to the UPRTase family. Mg(2+) is required as a cofactor.

The catalysed reaction is UMP + diphosphate = 5-phospho-alpha-D-ribose 1-diphosphate + uracil. Its pathway is pyrimidine metabolism; UMP biosynthesis via salvage pathway; UMP from uracil: step 1/1. Allosterically activated by GTP. Its function is as follows. Catalyzes the conversion of uracil and 5-phospho-alpha-D-ribose 1-diphosphate (PRPP) to UMP and diphosphate. The polypeptide is Uracil phosphoribosyltransferase (Thermus thermophilus (strain ATCC 27634 / DSM 579 / HB8)).